Reading from the N-terminus, the 513-residue chain is PPE family protein PPE4 (513 aa).

The next 3 membrane-spanning stretches (helical) occupy residues 233 to 253 (IIIA…PLLF), 277 to 297 (FLLP…PIVL), and 309 to 329 (LAAA…AVTG). Disordered regions lie at residues 395–446 (AAAA…ERGA) and 469–513 (LAGD…HDSK).

This sequence belongs to the mycobacterial PPE family.

Its subcellular location is the cell membrane. Functionally, important for the siderophore-mediated iron-acquisition function of ESX-3. The protein is PPE family protein PPE4 (PPE4) of Mycobacterium tuberculosis (strain CDC 1551 / Oshkosh).